A 304-amino-acid chain; its full sequence is Xylanase inhibitor protein 1 (304 aa).

The N-terminal stretch at 1 to 30 (MAPLAARRPACLLALLSVAAALFLTPTALA) is a signal peptide. The region spanning 36–304 (GQVTVFWGRN…NYSSLIKYYA (269 aa)) is the GH18 domain. Cys55 and Cys96 form a disulfide bridge. N-linked (GlcNAc...) asparagine glycosylation occurs at Asn119. Glu158 functions as the Proton donor in the catalytic mechanism. Positions 178–184 (IRGGPGK) are interaction with fungal GH11 xylanase. Cysteines 194 and 225 form a disulfide. Positions 262–275 (HPKNVYYGVAPVAQ) are interaction with fungal GH10 xylanase. A glycan (N-linked (GlcNAc...) asparagine) is linked at Asn295.

The protein belongs to the glycosyl hydrolase 18 family. Xylanase inhibitor subfamily. As to quaternary structure, binds to fungal GH10 and GH11 xylanases. Also forms a ternary complex with barley alpha-amylase 1 (AMY1) and insoluble starch.

It is found in the secreted. Fungal xylanase inhibitor. Possesses competitive inhibiting activity against fungal endo-1,4-beta-D-xylanases belonging to glycoside hydrolase family 10 (GH10) and family 11 (GH11). Possesses also inhibitory activity towards barley alpha-amylases. Binding to xylanases or amylases is necessary for inhibition activity. May function in plant defense against secreted fungal pathogen xylanases. Is similar to class III chitinases, but does not exhibit chitinase activity. This Triticum aestivum (Wheat) protein is Xylanase inhibitor protein 1.